A 160-amino-acid chain; its full sequence is Nucleotide-binding protein ASA_3207 (160 aa).

It belongs to the YajQ family.

In terms of biological role, nucleotide-binding protein. This chain is Nucleotide-binding protein ASA_3207, found in Aeromonas salmonicida (strain A449).